The following is a 366-amino-acid chain: D-alanine--D-alanine ligase (366 aa).

The ATP-grasp domain occupies K145–E348. V175–E230 contacts ATP. Mg(2+) is bound by residues D302, E315, and N317.

Belongs to the D-alanine--D-alanine ligase family. It depends on Mg(2+) as a cofactor. Requires Mn(2+) as cofactor.

It is found in the cytoplasm. The enzyme catalyses 2 D-alanine + ATP = D-alanyl-D-alanine + ADP + phosphate + H(+). It participates in cell wall biogenesis; peptidoglycan biosynthesis. Cell wall formation. In Proteus mirabilis (strain HI4320), this protein is D-alanine--D-alanine ligase.